A 435-amino-acid polypeptide reads, in one-letter code: Cytochrome c biogenesis protein CcsB (435 aa).

Helical transmembrane passes span 14-34 (LRLAILLLLLIAGASALGTIL), 72-92 (SVWFLSLLAWLGLALILCSWR), and 162-182 (VGPLLVHTGLVLLLIGAAWGA).

This sequence belongs to the Ccs1/CcsB family. May interact with CcsA.

It is found in the cellular thylakoid membrane. Its function is as follows. Required during biogenesis of c-type cytochromes (cytochrome c6 and cytochrome f) at the step of heme attachment. The protein is Cytochrome c biogenesis protein CcsB of Synechococcus sp. (strain CC9311).